The sequence spans 692 residues: Putative receptor-like protein kinase At1g80870 (692 aa).

Residues Leu20 to Ile40 form a helical membrane-spanning segment. The Protein kinase domain occupies Phe81–Phe673. ATP contacts are provided by residues Ile87 to Val95 and Lys109. Asp206 acts as the Proton acceptor in catalysis. 2 disordered regions span residues Glu427–Met446 and Arg511–Met533. 2 stretches are compositionally biased toward basic residues: residues Lys432 to Arg444 and Arg511 to Asn524.

It belongs to the protein kinase superfamily. Ser/Thr protein kinase family.

It is found in the cell membrane. It carries out the reaction L-seryl-[protein] + ATP = O-phospho-L-seryl-[protein] + ADP + H(+). It catalyses the reaction L-threonyl-[protein] + ATP = O-phospho-L-threonyl-[protein] + ADP + H(+). The chain is Putative receptor-like protein kinase At1g80870 from Arabidopsis thaliana (Mouse-ear cress).